A 332-amino-acid polypeptide reads, in one-letter code: Glycerol-3-phosphate dehydrogenase [NAD(P)+] (332 aa).

Positions 11, 30, and 108 each coordinate NADPH. Sn-glycerol 3-phosphate is bound by residues lysine 108, glycine 137, and serine 139. Alanine 141 provides a ligand contact to NADPH. 5 residues coordinate sn-glycerol 3-phosphate: lysine 192, aspartate 245, serine 255, arginine 256, and asparagine 257. Lysine 192 (proton acceptor) is an active-site residue. Arginine 256 contributes to the NADPH binding site. Positions 280 and 282 each coordinate NADPH.

This sequence belongs to the NAD-dependent glycerol-3-phosphate dehydrogenase family.

The protein resides in the cytoplasm. The catalysed reaction is sn-glycerol 3-phosphate + NAD(+) = dihydroxyacetone phosphate + NADH + H(+). The enzyme catalyses sn-glycerol 3-phosphate + NADP(+) = dihydroxyacetone phosphate + NADPH + H(+). Its pathway is membrane lipid metabolism; glycerophospholipid metabolism. Its function is as follows. Catalyzes the reduction of the glycolytic intermediate dihydroxyacetone phosphate (DHAP) to sn-glycerol 3-phosphate (G3P), the key precursor for phospholipid synthesis. The sequence is that of Glycerol-3-phosphate dehydrogenase [NAD(P)+] from Paraburkholderia phymatum (strain DSM 17167 / CIP 108236 / LMG 21445 / STM815) (Burkholderia phymatum).